The sequence spans 409 residues: UPF0261 protein Spro_4740 (409 aa).

The protein belongs to the UPF0261 family.

The polypeptide is UPF0261 protein Spro_4740 (Serratia proteamaculans (strain 568)).